The sequence spans 233 residues: Orotidine 5'-phosphate decarboxylase (233 aa).

Residues aspartate 11, lysine 34, 61-70 (DLKLHDIPNT), threonine 117, arginine 179, glutamine 189, glycine 209, and arginine 210 each bind substrate. Lysine 63 acts as the Proton donor in catalysis.

The protein belongs to the OMP decarboxylase family. Type 1 subfamily. As to quaternary structure, homodimer.

The enzyme catalyses orotidine 5'-phosphate + H(+) = UMP + CO2. Its pathway is pyrimidine metabolism; UMP biosynthesis via de novo pathway; UMP from orotate: step 2/2. Its function is as follows. Catalyzes the decarboxylation of orotidine 5'-monophosphate (OMP) to uridine 5'-monophosphate (UMP). The sequence is that of Orotidine 5'-phosphate decarboxylase from Streptococcus agalactiae serotype III (strain NEM316).